Here is a 183-residue protein sequence, read N- to C-terminus: Endoribonuclease YbeY (183 aa).

Residues H118, H122, and H128 each coordinate Zn(2+). The segment at 156–183 (EREQAQRSADSAVLGAVGLEEQDGPGTH) is disordered.

This sequence belongs to the endoribonuclease YbeY family. It depends on Zn(2+) as a cofactor.

It is found in the cytoplasm. Its function is as follows. Single strand-specific metallo-endoribonuclease involved in late-stage 70S ribosome quality control and in maturation of the 3' terminus of the 16S rRNA. This chain is Endoribonuclease YbeY, found in Saccharopolyspora erythraea (strain ATCC 11635 / DSM 40517 / JCM 4748 / NBRC 13426 / NCIMB 8594 / NRRL 2338).